Here is a 194-residue protein sequence, read N- to C-terminus: 5'-deoxynucleotidase VC_1978 (194 aa).

Residues 18–19 and histidine 33 each bind substrate; that span reads RW. One can recognise an HD domain in the interval 30-142; the sequence is ISEHSLQVAF…VKQADAICAY (113 aa). A divalent metal cation-binding residues include histidine 33, histidine 68, and aspartate 69. Substrate-binding positions include aspartate 69, 77-80, and aspartate 137; that span reads DLPT. Aspartate 137 contributes to the a divalent metal cation binding site.

It belongs to the 5DNU family. In terms of assembly, homodimer. It depends on a divalent metal cation as a cofactor.

It localises to the cytoplasm. The catalysed reaction is a 2'-deoxyribonucleoside 5'-phosphate + H2O = a 2'-deoxyribonucleoside + phosphate. Functionally, catalyzes the strictly specific dephosphorylation of 2'-deoxyribonucleoside 5'-monophosphates. The protein is 5'-deoxynucleotidase VC_1978 of Vibrio cholerae serotype O1 (strain ATCC 39315 / El Tor Inaba N16961).